Consider the following 382-residue polypeptide: MKVLHFGAGNIGRGFIGKLLADAGVEVVFADVNQQVLDALNQRHQYQVRVVGEQAQVETVRGVSAVHSGSDDVVALIASVDLVTAAVGPQILERIAPAIARGLVKRHDGGGTQPLNIIACENMVRGTSQLKQHVLNALEPRYHAWVDQHVGFVDSAVDRIVPPVEAGSDDPLAVTVESFSEWILDKTQFKGVPPALGGMELTDNLMAFMERKLFTLNTGHAITAYLGQLAGHQTIRDAILDPAVRQTVKGAMEESGAVLINRYGFDARKHAAYINKILQRFENPYLHDDVERVGRQPLRKLGAGDRLIKPLRGTLEYGLGDANLVTGIAAAMHYHSDQDPQAKEWAALLAEVGPQAALAKVSGLEEDSEVVAQVVNAYNAMQ.

Position 3–14 (3–14 (VLHFGAGNIGRG)) interacts with NAD(+).

The protein belongs to the mannitol dehydrogenase family.

It catalyses the reaction D-mannitol 1-phosphate + NAD(+) = beta-D-fructose 6-phosphate + NADH + H(+). The polypeptide is Mannitol-1-phosphate 5-dehydrogenase (Sodalis glossinidius (strain morsitans)).